Consider the following 1651-residue polypeptide: Putative serine/threonine-protein kinase/receptor R818 (1651 aa).

Positions Met-1–Gly-19 are cleaved as a signal peptide. N-linked (GlcNAc...) asparagine; by host glycans are attached at residues Asn-111, Asn-135, Asn-190, Asn-236, Asn-275, Asn-276, Asn-287, Asn-452, Asn-455, Asn-477, Asn-495, Asn-540, Asn-596, and Asn-722. The chain crosses the membrane as a helical span at residues Ile-749–Val-769. Residues Leu-793–Ile-1057 form the Protein kinase 1 domain. Residues Leu-799–Val-807 and Lys-820 each bind ATP. Asp-915 functions as the Proton acceptor in the catalytic mechanism. Residues Ile-1089–Thr-1115 are disordered. Residues Gly-1100–Thr-1115 are compositionally biased toward low complexity. In terms of domain architecture, Guanylate cyclase spans Ile-1135–Thr-1278. Residues Ile-1394–Leu-1645 form the Protein kinase 2 domain. ATP is bound by residues Ile-1400 to Val-1408 and Lys-1421. The active-site Proton acceptor is the Asp-1515.

It is found in the membrane. The catalysed reaction is L-seryl-[protein] + ATP = O-phospho-L-seryl-[protein] + ADP + H(+). It carries out the reaction L-threonyl-[protein] + ATP = O-phospho-L-threonyl-[protein] + ADP + H(+). The chain is Putative serine/threonine-protein kinase/receptor R818 from Acanthamoeba polyphaga mimivirus (APMV).